The sequence spans 166 residues: Transcription antitermination protein NusB (166 aa).

This sequence belongs to the NusB family.

Its function is as follows. Involved in transcription antitermination. Required for transcription of ribosomal RNA (rRNA) genes. Binds specifically to the boxA antiterminator sequence of the ribosomal RNA (rrn) operons. The chain is Transcription antitermination protein NusB from Chromohalobacter salexigens (strain ATCC BAA-138 / DSM 3043 / CIP 106854 / NCIMB 13768 / 1H11).